We begin with the raw amino-acid sequence, 256 residues long: Triosephosphate isomerase (256 aa).

9–11 (NWK) contacts substrate. H95 (electrophile) is an active-site residue. Catalysis depends on E167, which acts as the Proton acceptor. Substrate contacts are provided by residues G173, S212, and 233–234 (GG).

The protein belongs to the triosephosphate isomerase family. Homodimer.

Its subcellular location is the cytoplasm. It catalyses the reaction D-glyceraldehyde 3-phosphate = dihydroxyacetone phosphate. Its pathway is carbohydrate biosynthesis; gluconeogenesis. It functions in the pathway carbohydrate degradation; glycolysis; D-glyceraldehyde 3-phosphate from glycerone phosphate: step 1/1. Involved in the gluconeogenesis. Catalyzes stereospecifically the conversion of dihydroxyacetone phosphate (DHAP) to D-glyceraldehyde-3-phosphate (G3P). The polypeptide is Triosephosphate isomerase (Proteus mirabilis (strain HI4320)).